Reading from the N-terminus, the 177-residue chain is Putative thioredoxin peroxidase (177 aa).

The Thioredoxin domain maps to 1–158 (MFPKTLTDSK…IIRLIDAITF (158 aa)). C45 functions as the Cysteine sulfenic acid (-SOH) intermediate in the catalytic mechanism.

This sequence belongs to the peroxiredoxin family. AhpC/Prx1 subfamily. Homodimer; disulfide-linked, upon oxidation.

It catalyses the reaction a hydroperoxide + [thioredoxin]-dithiol = an alcohol + [thioredoxin]-disulfide + H2O. Functionally, thiol-specific peroxidase that catalyzes the reduction of hydrogen peroxide and organic hydroperoxides to water and alcohols, respectively. Plays a role in cell protection against oxidative stress by detoxifying peroxides and as sensor of hydrogen peroxide-mediated signaling events. In Encephalitozoon cuniculi (strain GB-M1) (Microsporidian parasite), this protein is Putative thioredoxin peroxidase.